Consider the following 190-residue polypeptide: dCTP deaminase (190 aa).

Residue 107–112 (KSTYAR) coordinates dCTP. Glutamate 133 acts as the Proton donor/acceptor in catalysis. The dCTP site is built by glutamine 152, tyrosine 166, and glutamine 176.

This sequence belongs to the dCTP deaminase family. In terms of assembly, homotrimer.

It carries out the reaction dCTP + H2O + H(+) = dUTP + NH4(+). Its pathway is pyrimidine metabolism; dUMP biosynthesis; dUMP from dCTP (dUTP route): step 1/2. Its function is as follows. Catalyzes the deamination of dCTP to dUTP. In Campylobacter hominis (strain ATCC BAA-381 / DSM 21671 / CCUG 45161 / LMG 19568 / NCTC 13146 / CH001A), this protein is dCTP deaminase.